Here is a 422-residue protein sequence, read N- to C-terminus: NADH-quinone oxidoreductase subunit F (422 aa).

Residues 1-26 form a disordered region; the sequence is MLKEEDKIFTNLHGQQSHDLKSSKKR. Residues 16 to 26 show a composition bias toward basic and acidic residues; sequence QSHDLKSSKKR. 54-63 lines the NAD(+) pocket; sequence GRGGAGFSTG. 166-213 is an FMN binding site; sequence GAGAYICGEETALLESLEGKKGMPRLKPPFPAGFGLYGCPTTINNVES. The [4Fe-4S] cluster site is built by Cys-344, Cys-347, Cys-350, and Cys-390.

This sequence belongs to the complex I 51 kDa subunit family. FMN is required as a cofactor. Requires [4Fe-4S] cluster as cofactor.

The catalysed reaction is a quinone + NADH + 5 H(+)(in) = a quinol + NAD(+) + 4 H(+)(out). NDH-1 shuttles electrons from NADH, via FMN and iron-sulfur (Fe-S) centers, to quinones in the respiratory chain. Couples the redox reaction to proton translocation (for every two electrons transferred, four hydrogen ions are translocated across the cytoplasmic membrane), and thus conserves the redox energy in a proton gradient. This Rickettsia felis (strain ATCC VR-1525 / URRWXCal2) (Rickettsia azadi) protein is NADH-quinone oxidoreductase subunit F (nuoF).